Reading from the N-terminus, the 606-residue chain is Mitogen-activated protein kinase kinase kinase 7 (606 aa).

The interaction with MAPK8IP1 stretch occupies residues 1–300; sequence MSTASAASSS…FPGADEPLQY (300 aa). Residues 36–291 form the Protein kinase domain; the sequence is IEVEEVVGRG…KIMTHLMRYF (256 aa). Residues 42 to 50 and lysine 63 contribute to the ATP site; that span reads VGRGAFGVV. Residue lysine 72 forms a Glycyl lysine isopeptide (Lys-Gly) (interchain with G-Cter in ubiquitin) linkage. Aspartate 156 serves as the catalytic Proton acceptor. A Glycyl lysine isopeptide (Lys-Gly) (interchain with G-Cter in ubiquitin) cross-link involves residue lysine 158. Residues threonine 184 and threonine 187 each carry the phosphothreonine; by autocatalysis modification. At serine 192 the chain carries Phosphoserine; by autocatalysis. Lysine 209 participates in a covalent cross-link: Glycyl lysine isopeptide (Lys-Gly) (interchain with G-Cter in ubiquitin). 2 disordered regions span residues 301 to 338 and 354 to 391; these read PCQYSDEGQSNSATSTGSFMDIASTNTSNKSDTNMEQV and KNQAKQQSDSGRLSLGASRGSSVESLPPTSEGKRMSAD. A compositionally biased stretch (polar residues) spans 306-338; sequence DEGQSNSATSTGSFMDIASTNTSNKSDTNMEQV. The segment covering 361–375 has biased composition (low complexity); the sequence is SDSGRLSLGASRGSS. 3 positions are modified to phosphoserine: serine 367, serine 389, and serine 439. Residues 443–452 are compositionally biased toward polar residues; the sequence is LTVTGTEPGQ. Positions 443-492 are disordered; the sequence is LTVTGTEPGQVSSRSSSPSVRMITTSGPTSEKPARSLPWTPDDSTDTNGS. Residues 453–463 are compositionally biased toward low complexity; the sequence is VSSRSSSPSVR. Serine 455 bears the Phosphoserine mark.

The protein belongs to the protein kinase superfamily. STE Ser/Thr protein kinase family. MAP kinase kinase kinase subfamily. Can form homodimer. Binds both upstream activators and downstream substrates in multimolecular complexes. Interacts with TAB1/MAP3K7IP1, TAB2/MAP3K7IP2 and TAB3/MAP3K7IP3. Identified in the TRIKA2 complex composed of MAP3K7/TAK1, TAB1/MAP3K7IP1 and TAB2/MAP3K7IP2. Interacts with PPM1L and PPM1B/PP2CB. Interaction with PP2A and PPP6C leads to its repressed activity. Interacts with TRAF6 and TAB1/MAP3K7IP1; during IL-1 signaling. Interacts with TAOK1 and TAOK2; interaction with TAOK2 interferes with MAP3K7 interaction with IKKA, thus preventing NF-kappa-B activation. Interacts with DYNC2I2 (via WD domains). Interacts with CYLD and RBCK1. Interacts with TGFBR1; induces MAP3K7/TAK1 activation by TRAF6. Interacts with MAPK8IP1 and SMAD6. Interacts with isoform 1 of VRK2. Interacts with DAB2; the interaction is induced by TGF-beta stimulation and may mediate TGF-beta stimulated JNK activation. Interacts with TRIM5. Part of a complex containing ITCH, NDFIP1 and MAP3K7. Interacts with PLEKHM1 (via N- and C-terminus). Found in a complex with SH3RF1, RAC2, MAP2K7/MKK7, MAPK8IP1/JIP1, MAPK8/JNK1 and MAPK9/JNK2. Interacts with SASH1. Interacts with RIPK1. Mg(2+) serves as cofactor. Post-translationally, association with TAB1/MAP3K7IP1 promotes autophosphorylation at Ser-192 and subsequent activation. Association with TAB2/MAP3K7IP2, itself associated with free unanchored Lys-63 polyubiquitin chain, promotes autophosphorylation and subsequent activation of MAP3K7. Dephosphorylation at Ser-192 by PPM1B/PP2CB and at Thr-187 by PP2A and PPP6C leads to inactivation. Deubiquitinated by USP19; leading to negative regulation of TNF-alpha- and IL-1beta-triggered NF-kappa-B activation. In terms of processing, 'Lys-48'-linked polyubiquitination at Lys-72 is induced by TNFalpha, and leads to proteasomal degradation. Undergoes 'Lys-48'-linked polyubiquitination catalyzed by ITCH. 'Lys-63'-linked polyubiquitination at Lys-158 by TRIM8 does not lead to proteasomal degradation but contributes to autophosphorylation and activation. Deubiquitinated by CYLD, a protease that selectively cleaves 'Lys-63'-linked ubiquitin chains.

It is found in the cytoplasm. It localises to the cell membrane. It catalyses the reaction L-seryl-[protein] + ATP = O-phospho-L-seryl-[protein] + ADP + H(+). The catalysed reaction is L-threonyl-[protein] + ATP = O-phospho-L-threonyl-[protein] + ADP + H(+). Activated by pro-inflammatory cytokines and in response to physical and chemical stresses, including osmotic stress, oxidative stress, arsenic and ultraviolet light irradiation. Activated by 'Lys-63'-linked polyubiquitination and by autophosphorylation. Association with TAB1/MAP3K7IP1 and TAB2/MAP3K7IP2 promotes activation through autophosphorylation, whereas PPM1B/PP2CB, PP2A and PPP6C dephosphorylation leads to inactivation. Ceramides are also able to activate MAP3K7/TAK1. Functionally, serine/threonine kinase which acts as an essential component of the MAP kinase signal transduction pathway. Plays an important role in the cascades of cellular responses evoked by changes in the environment. Mediates signal transduction of TRAF6, various cytokines including interleukin-1 (IL-1), transforming growth factor-beta (TGFB), TGFB-related factors like BMP2 and BMP4, toll-like receptors (TLR), tumor necrosis factor receptor CD40 and B-cell receptor (BCR). Once activated, acts as an upstream activator of the MKK/JNK signal transduction cascade and the p38 MAPK signal transduction cascade through the phosphorylation and activation of several MAP kinase kinases like MAP2K1/MEK1, MAP2K3/MKK3, MAP2K6/MKK6 and MAP2K7/MKK7. These MAP2Ks in turn activate p38 MAPKs and c-jun N-terminal kinases (JNKs); both p38 MAPK and JNK pathways control the transcription factors activator protein-1 (AP-1). Independently of MAP2Ks and p38 MAPKs, acts as a key activator of NF-kappa-B by promoting activation of the I-kappa-B-kinase (IKK) core complex. Mechanistically, recruited to polyubiquitin chains of RIPK2 and IKBKG/NEMO via TAB2/MAP3K7IP2 and TAB3/MAP3K7IP3, and catalyzes phosphorylation and activation of IKBKB/IKKB component of the IKK complex, leading to NF-kappa-B activation. In osmotic stress signaling, plays a major role in the activation of MAPK8/JNK1, but not that of NF-kappa-B. Promotes TRIM5 capsid-specific restriction activity. Phosphorylates RIPK1 at 'Ser-321' which positively regulates RIPK1 interaction with RIPK3 to promote necroptosis but negatively regulates RIPK1 kinase activity and its interaction with FADD to mediate apoptosis. Phosphorylates STING1 in response to cGAMP-activation, promoting association between STEEP1 and STING1 and STING1 translocation to COPII vesicles. This chain is Mitogen-activated protein kinase kinase kinase 7 (Map3k7), found in Rattus norvegicus (Rat).